The primary structure comprises 406 residues: uncharacterized protein (406 aa).

Over residues 136–153 (SQKNWGSEKNWNSPSQGP) the composition is skewed to polar residues. A disordered region spans residues 136-157 (SQKNWGSEKNWNSPSQGPASRE).

This is an uncharacterized protein from Rattus norvegicus (Rat).